Consider the following 187-residue polypeptide: Holliday junction branch migration complex subunit RuvA (187 aa).

The domain I stretch occupies residues 1 to 64 (MIEYIRGIIE…EDGFQIFGFK (64 aa)). Positions 65–136 (RKEELELFEK…ELKDKVPKEV (72 aa)) are domain II. The tract at residues 136-139 (VVVP) is flexible linker. Residues 140–187 (KEDSLLNEALEALLALGYTKSEAIYALSDVNCESVEQAVKEALKKLAK) form a domain III region.

This sequence belongs to the RuvA family. Homotetramer. Forms an RuvA(8)-RuvB(12)-Holliday junction (HJ) complex. HJ DNA is sandwiched between 2 RuvA tetramers; dsDNA enters through RuvA and exits via RuvB. An RuvB hexamer assembles on each DNA strand where it exits the tetramer. Each RuvB hexamer is contacted by two RuvA subunits (via domain III) on 2 adjacent RuvB subunits; this complex drives branch migration. In the full resolvosome a probable DNA-RuvA(4)-RuvB(12)-RuvC(2) complex forms which resolves the HJ.

Its subcellular location is the cytoplasm. In terms of biological role, the RuvA-RuvB-RuvC complex processes Holliday junction (HJ) DNA during genetic recombination and DNA repair, while the RuvA-RuvB complex plays an important role in the rescue of blocked DNA replication forks via replication fork reversal (RFR). RuvA specifically binds to HJ cruciform DNA, conferring on it an open structure. The RuvB hexamer acts as an ATP-dependent pump, pulling dsDNA into and through the RuvAB complex. HJ branch migration allows RuvC to scan DNA until it finds its consensus sequence, where it cleaves and resolves the cruciform DNA. The polypeptide is Holliday junction branch migration complex subunit RuvA (Caldanaerobacter subterraneus subsp. tengcongensis (strain DSM 15242 / JCM 11007 / NBRC 100824 / MB4) (Thermoanaerobacter tengcongensis)).